We begin with the raw amino-acid sequence, 462 residues long: Argininosuccinate lyase (462 aa).

It belongs to the lyase 1 family. Argininosuccinate lyase subfamily.

The protein localises to the cytoplasm. It catalyses the reaction 2-(N(omega)-L-arginino)succinate = fumarate + L-arginine. Its pathway is amino-acid biosynthesis; L-arginine biosynthesis; L-arginine from L-ornithine and carbamoyl phosphate: step 3/3. This chain is Argininosuccinate lyase, found in Pelagibacter ubique (strain HTCC1062).